Reading from the N-terminus, the 295-residue chain is Succinate dehydrogenase [ubiquinone] iron-sulfur subunit, mitochondrial (295 aa).

In terms of domain architecture, 2Fe-2S ferredoxin-type spans 67–144 (EKPRLQSYTL…DTKIYPLPHM (78 aa)). [2Fe-2S] cluster contacts are provided by cysteine 106, cysteine 111, cysteine 114, and cysteine 126. The 4Fe-4S ferredoxin-type domain occupies 185-215 (ERRRLDGLYECILCACCSTSCPSYWWNQDEY). Residues cysteine 195, cysteine 198, and cysteine 201 each contribute to the [4Fe-4S] cluster site. Cysteine 205 serves as a coordination point for [3Fe-4S] cluster. Tryptophan 210 provides a ligand contact to a ubiquinone. [3Fe-4S] cluster-binding residues include cysteine 252 and cysteine 258. [4Fe-4S] cluster is bound at residue cysteine 262.

It belongs to the succinate dehydrogenase/fumarate reductase iron-sulfur protein family. In terms of assembly, component of complex II composed of four subunits: a flavoprotein (FP), an iron-sulfur protein (IP), and a cytochrome b composed of a large and a small subunit. It depends on [2Fe-2S] cluster as a cofactor. Requires [3Fe-4S] cluster as cofactor. [4Fe-4S] cluster is required as a cofactor.

The protein localises to the mitochondrion inner membrane. The catalysed reaction is a quinone + succinate = fumarate + a quinol. It functions in the pathway carbohydrate metabolism; tricarboxylic acid cycle; fumarate from succinate (eukaryal route): step 1/1. Iron-sulfur protein (IP) subunit of succinate dehydrogenase (SDH) that is involved in complex II of the mitochondrial electron transport chain and is responsible for transferring electrons from succinate to ubiquinone (coenzyme Q). This is Succinate dehydrogenase [ubiquinone] iron-sulfur subunit, mitochondrial (SDH2) from Mycosarcoma maydis (Corn smut fungus).